A 195-amino-acid chain; its full sequence is Imidazoleglycerol-phosphate dehydratase (195 aa).

The protein belongs to the imidazoleglycerol-phosphate dehydratase family.

It localises to the cytoplasm. It carries out the reaction D-erythro-1-(imidazol-4-yl)glycerol 3-phosphate = 3-(imidazol-4-yl)-2-oxopropyl phosphate + H2O. It participates in amino-acid biosynthesis; L-histidine biosynthesis; L-histidine from 5-phospho-alpha-D-ribose 1-diphosphate: step 6/9. This Campylobacter concisus (strain 13826) protein is Imidazoleglycerol-phosphate dehydratase.